The sequence spans 636 residues: 1-deoxy-D-xylulose-5-phosphate synthase (636 aa).

Residues His72 and 113 to 115 (GHA) contribute to the thiamine diphosphate site. Mg(2+) is bound at residue Asp144. Thiamine diphosphate is bound by residues 145–146 (GA), Asn174, Tyr287, and Glu370. Asn174 contributes to the Mg(2+) binding site.

Belongs to the transketolase family. DXPS subfamily. Homodimer. Mg(2+) is required as a cofactor. The cofactor is thiamine diphosphate.

The enzyme catalyses D-glyceraldehyde 3-phosphate + pyruvate + H(+) = 1-deoxy-D-xylulose 5-phosphate + CO2. The protein operates within metabolic intermediate biosynthesis; 1-deoxy-D-xylulose 5-phosphate biosynthesis; 1-deoxy-D-xylulose 5-phosphate from D-glyceraldehyde 3-phosphate and pyruvate: step 1/1. Catalyzes the acyloin condensation reaction between C atoms 2 and 3 of pyruvate and glyceraldehyde 3-phosphate to yield 1-deoxy-D-xylulose-5-phosphate (DXP). This is 1-deoxy-D-xylulose-5-phosphate synthase from Microcystis aeruginosa (strain NIES-843 / IAM M-2473).